The following is a 279-amino-acid chain: 3-methyl-2-oxobutanoate hydroxymethyltransferase (279 aa).

Residues D43 and D82 each contribute to the Mg(2+) site. Residues 43 to 44, D82, and K112 contribute to the 3-methyl-2-oxobutanoate site; that span reads DS. Position 114 (E114) interacts with Mg(2+). Residue E181 is the Proton acceptor of the active site.

Belongs to the PanB family. Homodecamer; pentamer of dimers. Mg(2+) is required as a cofactor.

The protein localises to the cytoplasm. It carries out the reaction 3-methyl-2-oxobutanoate + (6R)-5,10-methylene-5,6,7,8-tetrahydrofolate + H2O = 2-dehydropantoate + (6S)-5,6,7,8-tetrahydrofolate. It participates in cofactor biosynthesis; (R)-pantothenate biosynthesis; (R)-pantoate from 3-methyl-2-oxobutanoate: step 1/2. Its function is as follows. Catalyzes the reversible reaction in which hydroxymethyl group from 5,10-methylenetetrahydrofolate is transferred onto alpha-ketoisovalerate to form ketopantoate. The sequence is that of 3-methyl-2-oxobutanoate hydroxymethyltransferase from Bacillus anthracis (strain A0248).